A 121-amino-acid chain; its full sequence is Small ribosomal subunit protein uS13 (121 aa).

The disordered stretch occupies residues 94 to 121 (GLPVRGQKTRNNAHTVKGKPKAIAGKKK). Over residues 109 to 121 (VKGKPKAIAGKKK) the composition is skewed to basic residues.

It belongs to the universal ribosomal protein uS13 family. As to quaternary structure, part of the 30S ribosomal subunit. Forms a loose heterodimer with protein S19. Forms two bridges to the 50S subunit in the 70S ribosome.

In terms of biological role, located at the top of the head of the 30S subunit, it contacts several helices of the 16S rRNA. In the 70S ribosome it contacts the 23S rRNA (bridge B1a) and protein L5 of the 50S subunit (bridge B1b), connecting the 2 subunits; these bridges are implicated in subunit movement. Contacts the tRNAs in the A and P-sites. This Onion yellows phytoplasma (strain OY-M) protein is Small ribosomal subunit protein uS13.